An 871-amino-acid chain; its full sequence is Dual O-methyltransferase/FAD-dependent monooxygenase CTB3 (871 aa).

Positions 1–429 (MMQFQRDLEA…GLLTVRSAGQ (429 aa)) are O-methyltransferase. Asp-279 lines the S-adenosyl-L-methionine pocket. The active-site Proton acceptor is the His-331. The interval 430–871 (TALSGTNTLT…NLVDCSEFVF (442 aa)) is FAD-dependent monooxygenase. FAD is bound by residues Glu-485, Arg-569, Asp-793, and Ala-806.

In the C-terminal section; belongs to the paxM FAD-dependent monooxygenase family. It in the N-terminal section; belongs to the class I-like SAM-binding methyltransferase superfamily. Cation-independent O-methyltransferase family. COMT subfamily.

It catalyses the reaction nor-toralactone + S-adenosyl-L-methionine = toralactone + S-adenosyl-L-homocysteine + H(+). It carries out the reaction toralactone + NADH + O2 + H(+) = 1-(3,4,5-trihydroxy-7-methoxynaphthalen-2-yl)propan-2-one + CO2 + NAD(+). Its pathway is mycotoxin biosynthesis. Dual O-methyltransferase/FAD-dependent monooxygenase; part of the gene cluster that mediates the biosynthesis of cercosporin, a light-activated, non-host-selective toxin. The perylenequinone chromophore of cercosporin absorbs light energy to attain an electronically-activated triplet state and produces active oxygen species such as the hydroxyl radical, superoxide, hydrogen peroxide or singlet oxygen upon reaction with oxygen molecules. These reactive oxygen species cause damage to various cellular components including lipids, proteins and nucleic acids. The first step of cercosporin biosynthesis is performed by the polyketide synthase CTB1 which catalyzes the formation of nor-toralactone. The starter unit acyltransferase (SAT) domain of CTB1 initiates polyketide extension by the selective utilization of acetyl-CoA, which is elongated to the heptaketide in the beta-ketoacyl synthase (KS) domain by successive condensations with six malonyl units introduced by the malonyl acyltransferase (MAT) domain. The product template (PT) domain catalyzes C4-C9 and C2-C11 aldol cyclizations and dehydrations to a trihydroxynaphthalene, which is thought to be delivered to the thioesterase (TE) domain for product release. The bifunctional enzyme CTB3 then methylates nor-toralactone to toralactone before conducting an unusual oxidative aromatic ring opening. The O-methyltransferase CTB2 further methylates the nascent OH-6 of the CBT3 product, blocking further oxidation at this site before the reductase CTB6 reduces the 2-oxopropyl ketone at position C7, giving naphthalene. The FAD-dependent monooxygenase CTB5 in concert with the multicopper oxidase CTB12 are responsible for homodimerization of naphthalene with CTB7 installing the dioxepine moiety, finally producing cercosporin. The fasciclin domain-containing protein CTB11 might act with CTB5 and CTB12 whereas the roles of CTB9 and CTB10 have still to be elucidated. This is Dual O-methyltransferase/FAD-dependent monooxygenase CTB3 from Cercospora beticola (Sugarbeet leaf spot fungus).